Reading from the N-terminus, the 141-residue chain is Nucleoside diphosphate kinase (141 aa).

Residues Lys-11, Phe-59, Arg-87, Thr-93, Arg-104, and Asn-114 each contribute to the ATP site. His-117 serves as the catalytic Pros-phosphohistidine intermediate.

Belongs to the NDK family. As to quaternary structure, homotetramer. Requires Mg(2+) as cofactor.

It localises to the cytoplasm. It carries out the reaction a 2'-deoxyribonucleoside 5'-diphosphate + ATP = a 2'-deoxyribonucleoside 5'-triphosphate + ADP. The enzyme catalyses a ribonucleoside 5'-diphosphate + ATP = a ribonucleoside 5'-triphosphate + ADP. Its function is as follows. Major role in the synthesis of nucleoside triphosphates other than ATP. The ATP gamma phosphate is transferred to the NDP beta phosphate via a ping-pong mechanism, using a phosphorylated active-site intermediate. This Hamiltonella defensa subsp. Acyrthosiphon pisum (strain 5AT) protein is Nucleoside diphosphate kinase.